The primary structure comprises 93 residues: Small ribosomal subunit protein uS19 (93 aa).

Residues 73–93 (EFSPTRTYRGHDKKDKKIQKK) are disordered.

It belongs to the universal ribosomal protein uS19 family.

Functionally, protein S19 forms a complex with S13 that binds strongly to the 16S ribosomal RNA. The sequence is that of Small ribosomal subunit protein uS19 from Phytoplasma mali (strain AT).